A 590-amino-acid chain; its full sequence is Aspartate--tRNA(Asp/Asn) ligase (590 aa).

Residue E172 participates in L-aspartate binding. The interval 196 to 199 (QLFK) is aspartate. Position 218 (R218) interacts with L-aspartate. Residues 218–220 (RDE) and Q227 each bind ATP. Position 449 (H449) interacts with L-aspartate. E484 contacts ATP. R491 is a binding site for L-aspartate. 536–539 (GIDR) provides a ligand contact to ATP.

This sequence belongs to the class-II aminoacyl-tRNA synthetase family. Type 1 subfamily. In terms of assembly, homodimer.

The protein localises to the cytoplasm. It carries out the reaction tRNA(Asx) + L-aspartate + ATP = L-aspartyl-tRNA(Asx) + AMP + diphosphate. In terms of biological role, aspartyl-tRNA synthetase with relaxed tRNA specificity since it is able to aspartylate not only its cognate tRNA(Asp) but also tRNA(Asn). Reaction proceeds in two steps: L-aspartate is first activated by ATP to form Asp-AMP and then transferred to the acceptor end of tRNA(Asp/Asn). The sequence is that of Aspartate--tRNA(Asp/Asn) ligase from Francisella tularensis subsp. tularensis (strain SCHU S4 / Schu 4).